Here is a 318-residue protein sequence, read N- to C-terminus: Small ribosomal subunit biogenesis GTPase RsgA (318 aa).

One can recognise a CP-type G domain in the interval 82 to 246; sequence RQDEIRTKSF…LIDSPGFQEF (165 aa). Residues 132–135 and 186–194 contribute to the GTP site; these read NKSD and GPSGAGKST. Residues Cys270, Cys275, His277, and Cys283 each contribute to the Zn(2+) site.

It belongs to the TRAFAC class YlqF/YawG GTPase family. RsgA subfamily. Monomer. Associates with 30S ribosomal subunit, binds 16S rRNA. Zn(2+) is required as a cofactor.

It is found in the cytoplasm. In terms of biological role, one of several proteins that assist in the late maturation steps of the functional core of the 30S ribosomal subunit. Helps release RbfA from mature subunits. May play a role in the assembly of ribosomal proteins into the subunit. Circularly permuted GTPase that catalyzes slow GTP hydrolysis, GTPase activity is stimulated by the 30S ribosomal subunit. This Variovorax paradoxus (strain S110) protein is Small ribosomal subunit biogenesis GTPase RsgA.